A 266-amino-acid chain; its full sequence is Undecaprenyl-diphosphatase (266 aa).

The next 8 helical transmembrane spans lie at 1 to 21 (MDTF…FLPI), 39 to 59 (QGLA…VLYF), 83 to 103 (SKLA…GFAL), 111 to 131 (LRGP…LWWA), 144 to 164 (TGWK…IPGT), 183 to 203 (AAAR…AILM), 218 to 238 (SLAL…HLFL), and 246 to 266 (MTPF…FIFM).

Belongs to the UppP family.

It localises to the cell inner membrane. The enzyme catalyses di-trans,octa-cis-undecaprenyl diphosphate + H2O = di-trans,octa-cis-undecaprenyl phosphate + phosphate + H(+). In terms of biological role, catalyzes the dephosphorylation of undecaprenyl diphosphate (UPP). Confers resistance to bacitracin. This chain is Undecaprenyl-diphosphatase, found in Shewanella woodyi (strain ATCC 51908 / MS32).